The sequence spans 417 residues: Gamma-glutamyl phosphate reductase (417 aa).

It belongs to the gamma-glutamyl phosphate reductase family.

The protein localises to the cytoplasm. The enzyme catalyses L-glutamate 5-semialdehyde + phosphate + NADP(+) = L-glutamyl 5-phosphate + NADPH + H(+). Its pathway is amino-acid biosynthesis; L-proline biosynthesis; L-glutamate 5-semialdehyde from L-glutamate: step 2/2. Its function is as follows. Catalyzes the NADPH-dependent reduction of L-glutamate 5-phosphate into L-glutamate 5-semialdehyde and phosphate. The product spontaneously undergoes cyclization to form 1-pyrroline-5-carboxylate. This Photorhabdus laumondii subsp. laumondii (strain DSM 15139 / CIP 105565 / TT01) (Photorhabdus luminescens subsp. laumondii) protein is Gamma-glutamyl phosphate reductase.